The primary structure comprises 65 residues: Large ribosomal subunit protein bL28 (65 aa).

Belongs to the bacterial ribosomal protein bL28 family.

This Pseudothermotoga lettingae (strain ATCC BAA-301 / DSM 14385 / NBRC 107922 / TMO) (Thermotoga lettingae) protein is Large ribosomal subunit protein bL28.